Consider the following 221-residue polypeptide: Transcriptional regulator GfcR (221 aa).

Residues 35-59 (ASWLVERSQPTDNSQSSSANNPTEA) are disordered. The segment covering 42–57 (SQPTDNSQSSSANNPT) has biased composition (polar residues).

This sequence belongs to the purine/pyrimidine phosphoribosyltransferase family. GfcR subfamily.

In terms of biological role, DNA-binding transcriptional regulator that functions as a regulator of central sugar catabolic pathways. The chain is Transcriptional regulator GfcR from Haloquadratum walsbyi (strain DSM 16790 / HBSQ001).